We begin with the raw amino-acid sequence, 283 residues long: Thymidylate synthase (283 aa).

Arginine 22 serves as a coordination point for dUMP. The active-site Nucleophile is cysteine 160. Residues 180–183 (RSCD), asparagine 191, and 221–223 (HIY) contribute to the dUMP site. A (6R)-5,10-methylene-5,6,7,8-tetrahydrofolate-binding site is contributed by aspartate 183. Residue serine 282 coordinates (6R)-5,10-methylene-5,6,7,8-tetrahydrofolate.

This sequence belongs to the thymidylate synthase family. Bacterial-type ThyA subfamily. In terms of assembly, homodimer.

The protein resides in the cytoplasm. It carries out the reaction dUMP + (6R)-5,10-methylene-5,6,7,8-tetrahydrofolate = 7,8-dihydrofolate + dTMP. It functions in the pathway pyrimidine metabolism; dTTP biosynthesis. Catalyzes the reductive methylation of 2'-deoxyuridine-5'-monophosphate (dUMP) to 2'-deoxythymidine-5'-monophosphate (dTMP) while utilizing 5,10-methylenetetrahydrofolate (mTHF) as the methyl donor and reductant in the reaction, yielding dihydrofolate (DHF) as a by-product. This enzymatic reaction provides an intracellular de novo source of dTMP, an essential precursor for DNA biosynthesis. The polypeptide is Thymidylate synthase (Mannheimia succiniciproducens (strain KCTC 0769BP / MBEL55E)).